Reading from the N-terminus, the 509-residue chain is MFS antiporter QDR1 (509 aa).

Topologically, residues Met1 to Leu41 are cytoplasmic. The helical transmembrane segment at Leu42–Phe62 threads the bilayer. Residues Pro63–Thr75 are Extracellular-facing. The chain crosses the membrane as a helical span at residues Pro76–Ile96. Residues Ser97–Arg106 are Cytoplasmic-facing. A helical transmembrane segment spans residues Arg107–Val129. Topologically, residues Tyr130–Leu132 are extracellular. A helical transmembrane segment spans residues Leu133–Ala155. Residues Gly156–Gly169 are Cytoplasmic-facing. The helical transmembrane segment at Ala170–Ile190 threads the bilayer. Residues Ser191–Arg197 lie on the Extracellular side of the membrane. The helical transmembrane segment at Ala198 to Leu218 threads the bilayer. Topologically, residues Ala219–Glu278 are cytoplasmic. A helical transmembrane segment spans residues Val279–Ser299. Residues Leu300–Ser312 lie on the Extracellular side of the membrane. Residues Val313–Ile333 traverse the membrane as a helical segment. The Cytoplasmic portion of the chain corresponds to Ala334 to Arg370. Residues Leu371–Cys391 form a helical membrane-spanning segment. Residues Leu392–Pro397 are Extracellular-facing. A helical membrane pass occupies residues Ile398 to Ile418. At Cys419 to Gly432 the chain is on the cytoplasmic side. A helical transmembrane segment spans residues Ala433–Leu453. Topologically, residues Asp454–Lys455 are extracellular. A helical membrane pass occupies residues Ile456 to Thr476. Over Asp477–Tyr509 the chain is Cytoplasmic.

It belongs to the major facilitator superfamily. CAR1 family.

The protein resides in the cell membrane. Functionally, MFS antiporter that does not display functional linkage as drug transporter and performs functions that significantly affect biofilm development and virulence. No substrate for transport has been identified yet, but plays an important role in the growth in the host. This Candida albicans (strain SC5314 / ATCC MYA-2876) (Yeast) protein is MFS antiporter QDR1 (QDR).